The chain runs to 400 residues: Elongation factor Tu (400 aa).

Positions 10 to 208 (KPHLNVGTIG…TMDEYFPEPQ (199 aa)) constitute a tr-type G domain. Positions 19–26 (GHIDHGKT) are G1. A GTP-binding site is contributed by 19–26 (GHIDHGKT). A Mg(2+)-binding site is contributed by Thr26. Positions 60–64 (GITIN) are G2. Residues 81 to 84 (DCPG) are G3. Residues 81-85 (DCPGH) and 136-139 (NKTD) each bind GTP. The tract at residues 136–139 (NKTD) is G4. A G5 region spans residues 174–176 (SAL).

It belongs to the TRAFAC class translation factor GTPase superfamily. Classic translation factor GTPase family. EF-Tu/EF-1A subfamily. In terms of assembly, monomer.

The protein localises to the cytoplasm. It catalyses the reaction GTP + H2O = GDP + phosphate + H(+). Functionally, GTP hydrolase that promotes the GTP-dependent binding of aminoacyl-tRNA to the A-site of ribosomes during protein biosynthesis. This chain is Elongation factor Tu, found in Thermosipho melanesiensis (strain DSM 12029 / CIP 104789 / BI429).